The primary structure comprises 453 residues: Magnesium transporter MgtE (453 aa).

Residues 1 to 286 are Cytoplasmic-facing; that stretch reads MNEGQEMEEQ…ENPLKAASKR (286 aa). Residues glutamate 71, aspartate 98, aspartate 102, glutamate 136, alanine 140, tyrosine 176, arginine 227, aspartate 230, alanine 233, aspartate 251, and glutamate 259 each contribute to the Mg(2+) site. 2 CBS domains span residues 142-205 and 206-262; these read MTTE…IADI and LNER…EAAS. The helical transmembrane segment at 287–307 threads the bilayer; it reads LPWLITLLFLGMSTASLISNY. Glutamate 308 is a topological domain (extracellular). A helical transmembrane segment spans residues 309 to 329; sequence SLVSEASILAVFISLITGTAG. At 330 to 360 the chain is on the cytoplasmic side; sequence NAGTQSLAVAVRRLAMKDEKDSNFGRLILSE. The chain crosses the membrane as a helical span at residues 361-381; the sequence is VLTGLVTGAVTGLTIMIVVGV. Residues 382 to 389 are Extracellular-facing; the sequence is WQHNLPLG. A helical membrane pass occupies residues 390–410; that stretch reads FVIGMAMLCAITVANLAGSLI. Over 411–427 the chain is Cytoplasmic; that stretch reads PMLMDKLGFDPAVASGP. A helical transmembrane segment spans residues 428-448; sequence FITTLSDLTSVLIYFNIASMF. Residue aspartate 434 coordinates Mg(2+). Residues 449–453 lie on the Extracellular side of the membrane; it reads MRYFV.

It belongs to the SLC41A transporter family. In terms of assembly, homodimer.

Its subcellular location is the cell membrane. It catalyses the reaction Mg(2+)(in) = Mg(2+)(out). Acts as a magnesium transporter. The sequence is that of Magnesium transporter MgtE from Enterococcus faecalis (strain ATCC 700802 / V583).